Consider the following 855-residue polypeptide: DNA mismatch repair protein MutS (855 aa).

621 to 628 (GPNMGGKS) provides a ligand contact to ATP.

Belongs to the DNA mismatch repair MutS family.

Functionally, this protein is involved in the repair of mismatches in DNA. It is possible that it carries out the mismatch recognition step. This protein has a weak ATPase activity. The sequence is that of DNA mismatch repair protein MutS from Francisella tularensis subsp. holarctica (strain OSU18).